The following is a 146-amino-acid chain: Large ribosomal subunit protein uL24 (146 aa).

A disordered region spans residues 1–33 (MKYNPRVTSSRRRNRKPHFTASSSERRVXMSSP). A compositionally biased stretch (basic residues) spans 9 to 18 (SSRRRNRKPH).

Belongs to the universal ribosomal protein uL24 family.

In Brassica campestris (Field mustard), this protein is Large ribosomal subunit protein uL24 (RPL26).